Consider the following 194-residue polypeptide: MIKVEDILRAYRHGFFPMADSREGTVSWCQPYQRAVVPLDSFRPSRSLRRVIGKKRFTIKINSVFEQVIRACSQPRSTGQETWLSEEIIKVFLKLHRLGVAHSVESWQDGELAGGLYGLSMGGAFFGESMFFFRSDASKVAFAWLVGYLKRKGYLLLDAQIMNPHLESLGAIEIPHEEYMVQLERALGKKISFV.

The protein belongs to the L/F-transferase family.

The protein resides in the cytoplasm. It catalyses the reaction N-terminal L-lysyl-[protein] + L-leucyl-tRNA(Leu) = N-terminal L-leucyl-L-lysyl-[protein] + tRNA(Leu) + H(+). It carries out the reaction N-terminal L-arginyl-[protein] + L-leucyl-tRNA(Leu) = N-terminal L-leucyl-L-arginyl-[protein] + tRNA(Leu) + H(+). The catalysed reaction is L-phenylalanyl-tRNA(Phe) + an N-terminal L-alpha-aminoacyl-[protein] = an N-terminal L-phenylalanyl-L-alpha-aminoacyl-[protein] + tRNA(Phe). Its function is as follows. Functions in the N-end rule pathway of protein degradation where it conjugates Leu, Phe and, less efficiently, Met from aminoacyl-tRNAs to the N-termini of proteins containing an N-terminal arginine or lysine. The polypeptide is Leucyl/phenylalanyl-tRNA--protein transferase (Chlorobaculum tepidum (strain ATCC 49652 / DSM 12025 / NBRC 103806 / TLS) (Chlorobium tepidum)).